We begin with the raw amino-acid sequence, 265 residues long: UDP-N-acetylenolpyruvoylglucosamine reductase (265 aa).

In terms of domain architecture, FAD-binding PCMH-type spans 15–169; it reads GVGGPAELWT…TRVRLKLKER (155 aa). Arg-149 is a catalytic residue. The segment at 182 to 203 is disordered; that stretch reads DRARKGQPKRKSAGCAFKNPPG. Residue Cys-196 is the Proton donor of the active site.

It belongs to the MurB family. The cofactor is FAD.

It localises to the cytoplasm. It carries out the reaction UDP-N-acetyl-alpha-D-muramate + NADP(+) = UDP-N-acetyl-3-O-(1-carboxyvinyl)-alpha-D-glucosamine + NADPH + H(+). It participates in cell wall biogenesis; peptidoglycan biosynthesis. In terms of biological role, cell wall formation. This is UDP-N-acetylenolpyruvoylglucosamine reductase from Thermus thermophilus (strain ATCC BAA-163 / DSM 7039 / HB27).